The primary structure comprises 284 residues: MGEIIDGKKLAKEIQEKVTREVAELVKEGKKPGLAVVLVGDNQASRTYVRNKQKRTEEAGMKSVLIELPENVTEEKLLSVVEELNEDKTIHGILVQLPLPEHISEEKVIDTISYDKDVDGFHPVNVGNLFIGKDSFVPCTPAGIIELIKSTGTQIEGKRAVVIGRSNIVGKPVAQLLLIENATVTIAHSRTKDLPQVAKEADILVVATGLAKFVKKDYIKPGAVVIDVGMDRDENNKLCGDVDFDDVVEEAGFITPVPGGVGPMTITMLLANTLKAAKRIWKMN.

Residues 164-166 (GRS) and Ser189 contribute to the NADP(+) site.

It belongs to the tetrahydrofolate dehydrogenase/cyclohydrolase family. As to quaternary structure, homodimer.

It catalyses the reaction (6R)-5,10-methylene-5,6,7,8-tetrahydrofolate + NADP(+) = (6R)-5,10-methenyltetrahydrofolate + NADPH. The catalysed reaction is (6R)-5,10-methenyltetrahydrofolate + H2O = (6R)-10-formyltetrahydrofolate + H(+). It functions in the pathway one-carbon metabolism; tetrahydrofolate interconversion. In terms of biological role, catalyzes the oxidation of 5,10-methylenetetrahydrofolate to 5,10-methenyltetrahydrofolate and then the hydrolysis of 5,10-methenyltetrahydrofolate to 10-formyltetrahydrofolate. This chain is Bifunctional protein FolD, found in Listeria monocytogenes serotype 4b (strain F2365).